The following is a 202-amino-acid chain: Ras-related protein ORAB-1 (202 aa).

GTP contacts are provided by residues 15-23, 33-40, 63-67, 121-124, and 151-153; these read GDSGVGKSC, YTESYIST, DTAGQ, NKCD, and SAK. The Effector region motif lies at 37–45; that stretch reads YISTIGVDF. The interval 173 to 202 is disordered; that stretch reads MGPGATSGGSEKSNVNIQSTPVKSSGGGCC. Over residues 180-195 the composition is skewed to polar residues; that stretch reads GGSEKSNVNIQSTPVK. S-geranylgeranyl cysteine attachment occurs at residues Cys-201 and Cys-202.

Belongs to the small GTPase superfamily. Rab family.

It is found in the cell membrane. Its function is as follows. Protein transport. Probably involved in vesicular traffic. The chain is Ras-related protein ORAB-1 from Diplobatis ommata (Ocellated electric ray).